The primary structure comprises 574 residues: Man(5)GlcNAc(2)-PP-dolichol translocation protein RFT1 (574 aa).

At 1-24 the chain is on the lumenal side; the sequence is MAKKNSQLPSTSEQILERSTTGAT. Residues 25–45 form a helical membrane-spanning segment; sequence FLMMGQLFTKLVTFILNNLLI. At 46 to 48 the chain is on the cytoplasmic side; sequence RFL. The helical transmembrane segment at 49–69 threads the bilayer; it reads SPRIFGITAFLEFIQGTVLFF. At 70 to 110 the chain is on the lumenal side; it reads SRDAIRLSTLRISDSGNGIIDDDDEEEYQETHYKSKVLQTA. The helical transmembrane segment at 111–131 threads the bilayer; it reads VNFAYIPFWIGFPLSIGLIAW. The Cytoplasmic portion of the chain corresponds to 132-148; the sequence is QYRNINAYFITLPFFRW. The helical transmembrane segment at 149–169 threads the bilayer; sequence SIFLIWLSIIVELLSEPFFIV. Over 170–181 the chain is Lumenal; the sequence is NQFMLNYAARSR. A helical transmembrane segment spans residues 182 to 202; that stretch reads FESIAVTTGCIVNFIVVYAVQ. Residues 203–218 are Cytoplasmic-facing; sequence QSRYPMGVVTSDIDKE. The chain crosses the membrane as a helical span at residues 219–239; the sequence is GIAILAFALGKLAHSITLLAC. Residues 240–319 lie on the Lumenal side of the membrane; sequence YYWDYLKNFK…INSLCTVEEQ (80 aa). A helical transmembrane segment spans residues 320-340; the sequence is GIYALLSNYGSLLTRLLFAPI. Topologically, residues 341–372 are cytoplasmic; the sequence is EESLRLFLARLLSSHNPKNLKLSIEVLVNLTR. The chain crosses the membrane as a helical span at residues 373–393; it reads FYIYLSLMIIVFGPANSSFLL. Residues 394-413 are Lumenal-facing; the sequence is QFLIGSKWSTTSVLDTIRVY. The helical transmembrane segment at 414–434 threads the bilayer; it reads CFYIPFLSLNGIFEAFFQSVA. The Cytoplasmic portion of the chain corresponds to 435–443; sequence TGDQILKHS. A helical transmembrane segment spans residues 444 to 464; that stretch reads YFMMAFSGIFLLNSWLLIEKL. The Lumenal portion of the chain corresponds to 465–469; sequence KLSIE. The chain crosses the membrane as a helical span at residues 470-490; sequence GLILSNIINMVLRILYCGVFL. The Cytoplasmic segment spans residues 491–509; the sequence is NKFHRELFTDSSFFFNFKD. The chain crosses the membrane as a helical span at residues 510–530; the sequence is FKTVIIAGSTICLLDWWFIGY. Residues 531 to 532 lie on the Lumenal side of the membrane; that stretch reads VK. The chain crosses the membrane as a helical span at residues 533–553; it reads NLQQFVVNVLFAMGLLALILV. The Cytoplasmic segment spans residues 554–574; sequence KERQTIQSFINKRAVSNSKDV.

Belongs to the RFT1 family.

The protein resides in the endoplasmic reticulum membrane. It participates in protein modification; protein glycosylation. Functionally, intramembrane glycolipid transporter that operates in the biosynthetic pathway of dolichol-linked oligosaccharides, the glycan precursors employed in protein asparagine (N)-glycosylation. The sequential addition of sugars to dolichol pyrophosphate produces dolichol-linked oligosaccharides containing fourteen sugars, including two GlcNAcs, nine mannoses and three glucoses. Once assembled, the oligosaccharide is transferred from the lipid to nascent proteins by oligosaccharyltransferases. The assembly of dolichol-linked oligosaccharides begins on the cytosolic side of the endoplasmic reticulum membrane and finishes in its lumen. RFT1 could mediate the translocation of the cytosolically oriented intermediate DolPP-GlcNAc2Man5, produced by ALG11, into the ER lumen where dolichol-linked oligosaccharides assembly continues. However, the intramembrane lipid transporter activity could not be confirmed in vitro. This chain is Man(5)GlcNAc(2)-PP-dolichol translocation protein RFT1, found in Saccharomyces cerevisiae (strain ATCC 204508 / S288c) (Baker's yeast).